A 127-amino-acid chain; its full sequence is Protein ApaG (127 aa).

The ApaG domain occupies Glu3–His127.

This is Protein ApaG from Nitrosospira multiformis (strain ATCC 25196 / NCIMB 11849 / C 71).